The primary structure comprises 298 residues: Cobalt-precorrin-5B C(1)-methyltransferase (298 aa).

It belongs to the CbiD family.

It carries out the reaction Co-precorrin-5B + S-adenosyl-L-methionine = Co-precorrin-6A + S-adenosyl-L-homocysteine. It participates in cofactor biosynthesis; adenosylcobalamin biosynthesis; cob(II)yrinate a,c-diamide from sirohydrochlorin (anaerobic route): step 6/10. Functionally, catalyzes the methylation of C-1 in cobalt-precorrin-5B to form cobalt-precorrin-6A. This chain is Cobalt-precorrin-5B C(1)-methyltransferase, found in Archaeoglobus fulgidus (strain ATCC 49558 / DSM 4304 / JCM 9628 / NBRC 100126 / VC-16).